We begin with the raw amino-acid sequence, 418 residues long: UDP-N-acetylglucosamine 1-carboxyvinyltransferase 2 (418 aa).

Phosphoenolpyruvate is bound at residue 22-23 (KN). Residue R92 participates in UDP-N-acetyl-alpha-D-glucosamine binding. The active-site Proton donor is C116. At C116 the chain carries 2-(S-cysteinyl)pyruvic acid O-phosphothioketal. The UDP-N-acetyl-alpha-D-glucosamine site is built by D305 and I327.

This sequence belongs to the EPSP synthase family. MurA subfamily.

It localises to the cytoplasm. It catalyses the reaction phosphoenolpyruvate + UDP-N-acetyl-alpha-D-glucosamine = UDP-N-acetyl-3-O-(1-carboxyvinyl)-alpha-D-glucosamine + phosphate. Its pathway is cell wall biogenesis; peptidoglycan biosynthesis. In terms of biological role, cell wall formation. Adds enolpyruvyl to UDP-N-acetylglucosamine. The chain is UDP-N-acetylglucosamine 1-carboxyvinyltransferase 2 from Mesorhizobium japonicum (strain LMG 29417 / CECT 9101 / MAFF 303099) (Mesorhizobium loti (strain MAFF 303099)).